The sequence spans 76 residues: MGGLSIWHWLIVLLIVALVFGTKKLRNIGNDLGSAVKGFKDGMKDGDAPADAQQLPRSGTVDVNAKEATRSDSNKA.

Residues 1–21 traverse the membrane as a helical segment; sequence MGGLSIWHWLIVLLIVALVFG. The tract at residues 43 to 76 is disordered; the sequence is MKDGDAPADAQQLPRSGTVDVNAKEATRSDSNKA. Over residues 64–76 the composition is skewed to basic and acidic residues; the sequence is NAKEATRSDSNKA.

The protein belongs to the TatA/E family. The Tat system comprises two distinct complexes: a TatABC complex, containing multiple copies of TatA, TatB and TatC subunits, and a separate TatA complex, containing only TatA subunits. Substrates initially bind to the TatABC complex, which probably triggers association of the separate TatA complex to form the active translocon.

The protein localises to the cell inner membrane. Its function is as follows. Part of the twin-arginine translocation (Tat) system that transports large folded proteins containing a characteristic twin-arginine motif in their signal peptide across membranes. TatA could form the protein-conducting channel of the Tat system. The sequence is that of Sec-independent protein translocase protein TatA from Burkholderia multivorans (strain ATCC 17616 / 249).